Reading from the N-terminus, the 192-residue chain is Adapter protein MecA (192 aa).

This sequence belongs to the MecA family. As to quaternary structure, homodimer.

Its function is as follows. Enables the recognition and targeting of unfolded and aggregated proteins to the ClpC protease or to other proteins involved in proteolysis. Acts negatively in the development of competence by binding ComK and recruiting it to the ClpCP protease. When overexpressed, inhibits sporulation. Also involved in Spx degradation by ClpC. The polypeptide is Adapter protein MecA (Oceanobacillus iheyensis (strain DSM 14371 / CIP 107618 / JCM 11309 / KCTC 3954 / HTE831)).